A 311-amino-acid polypeptide reads, in one-letter code: Malate dehydrogenase (311 aa).

Residues 7–13 and Asp-34 each bind NAD(+); that span reads GAAGGIG. Residues Arg-81 and Arg-87 each coordinate substrate. NAD(+)-binding positions include Asn-94 and 117-119; that span reads ITN. Substrate-binding residues include Asn-119 and Arg-153. The Proton acceptor role is filled by His-177. Met-227 contacts NAD(+).

Belongs to the LDH/MDH superfamily. MDH type 1 family. As to quaternary structure, homodimer.

The catalysed reaction is (S)-malate + NAD(+) = oxaloacetate + NADH + H(+). Its function is as follows. Catalyzes the reversible oxidation of malate to oxaloacetate. The polypeptide is Malate dehydrogenase (Vibrio atlanticus (strain LGP32) (Vibrio splendidus (strain Mel32))).